Here is a 139-residue protein sequence, read N- to C-terminus: FLYWCH family member 2 (139 aa).

2 disordered regions span residues 1–36 and 86–139; these read MPQPKPSEQEGESMKASQEPAPQPGTDVVPAAPRKP and EAQR…STSP. Residues 98–107 are compositionally biased toward basic and acidic residues; the sequence is PEQKRSKQNL. Low complexity predominate over residues 120–130; the sequence is VSSSSSEETTV.

This Mus musculus (Mouse) protein is FLYWCH family member 2 (Flywch2).